Consider the following 458-residue polypeptide: uncharacterized protein (458 aa).

This sequence belongs to the MG032/MG096/MG288 family.

This is an uncharacterized protein from Mycoplasma pneumoniae (strain ATCC 29342 / M129 / Subtype 1) (Mycoplasmoides pneumoniae).